The primary structure comprises 734 residues: Phosphoribosylformylglycinamidine synthase subunit PurL (734 aa).

His46 is a catalytic residue. Residues Tyr49 and Lys88 each contribute to the ATP site. Glu90 is a Mg(2+) binding site. Substrate-binding positions include 91 to 94 and Arg113; that span reads SHNH. His92 functions as the Proton acceptor in the catalytic mechanism. A Mg(2+)-binding site is contributed by Asp114. Gln237 contacts substrate. Asp265 is a Mg(2+) binding site. 309-311 is a binding site for substrate; that stretch reads ESQ. 2 residues coordinate ATP: Asp489 and Gly526. Asn527 serves as a coordination point for Mg(2+). Substrate is bound at residue Ser529.

It belongs to the FGAMS family. In terms of assembly, monomer. Part of the FGAM synthase complex composed of 1 PurL, 1 PurQ and 2 PurS subunits.

The protein localises to the cytoplasm. It carries out the reaction N(2)-formyl-N(1)-(5-phospho-beta-D-ribosyl)glycinamide + L-glutamine + ATP + H2O = 2-formamido-N(1)-(5-O-phospho-beta-D-ribosyl)acetamidine + L-glutamate + ADP + phosphate + H(+). It functions in the pathway purine metabolism; IMP biosynthesis via de novo pathway; 5-amino-1-(5-phospho-D-ribosyl)imidazole from N(2)-formyl-N(1)-(5-phospho-D-ribosyl)glycinamide: step 1/2. Its function is as follows. Part of the phosphoribosylformylglycinamidine synthase complex involved in the purines biosynthetic pathway. Catalyzes the ATP-dependent conversion of formylglycinamide ribonucleotide (FGAR) and glutamine to yield formylglycinamidine ribonucleotide (FGAM) and glutamate. The FGAM synthase complex is composed of three subunits. PurQ produces an ammonia molecule by converting glutamine to glutamate. PurL transfers the ammonia molecule to FGAR to form FGAM in an ATP-dependent manner. PurS interacts with PurQ and PurL and is thought to assist in the transfer of the ammonia molecule from PurQ to PurL. This chain is Phosphoribosylformylglycinamidine synthase subunit PurL, found in Gluconobacter oxydans (strain 621H) (Gluconobacter suboxydans).